The following is a 586-amino-acid chain: Aspartate--tRNA(Asp/Asn) ligase (586 aa).

Glu172 contacts L-aspartate. The aspartate stretch occupies residues 196-199 (QLYK). Arg218 contributes to the L-aspartate binding site. Residues 218-220 (RDE) and Gln227 each bind ATP. Residue His446 participates in L-aspartate binding. ATP is bound at residue Glu480. Arg487 provides a ligand contact to L-aspartate. An ATP-binding site is contributed by 532-535 (GIDR).

This sequence belongs to the class-II aminoacyl-tRNA synthetase family. Type 1 subfamily. As to quaternary structure, homodimer.

It localises to the cytoplasm. The catalysed reaction is tRNA(Asx) + L-aspartate + ATP = L-aspartyl-tRNA(Asx) + AMP + diphosphate. In terms of biological role, aspartyl-tRNA synthetase with relaxed tRNA specificity since it is able to aspartylate not only its cognate tRNA(Asp) but also tRNA(Asn). Reaction proceeds in two steps: L-aspartate is first activated by ATP to form Asp-AMP and then transferred to the acceptor end of tRNA(Asp/Asn). The polypeptide is Aspartate--tRNA(Asp/Asn) ligase (Borreliella afzelii (strain PKo) (Borrelia afzelii)).